The primary structure comprises 194 residues: Endoribonuclease ToxN (194 aa).

Residues 114–182 (MLKQYLFLKE…DQAKERDKAR (69 aa)) are a coiled coil. Over residues 171–182 (ERDQAKERDKAR) the composition is skewed to basic and acidic residues. Residues 171–194 (ERDQAKERDKARRIAYMRQMGRER) are disordered.

It belongs to the ToxN/AbiQ toxin family. As to quaternary structure, one ToxN monomer binds to a 34-nt-long single repeat of the ToxI RNA; this complex forms a triangular heterohexameric complex with ToxN connected by the ToxI RNA to another toxin molecule. The ToxI repeats are cleavage products of their precursor. The ToxI repeat forms a pseudoknot which occludes the toxin active site.

Its function is as follows. Toxic component of a type III toxin-antitoxin (TA) system. An endoribonuclease which cleaves between the first and second A of AAAAA sequences; it tolerates other nucleotides in positions +2 and +4 of the consensus. Digests cognate antitoxin RNA ToxI as shown by the 2'-3'-cyclic phosphate at the 3' end of the 34-nt repeats and probably other RNAs. Inhibits growth when expressed in E.coli without causing cell lysis; this bacteriostatic effect is neutralized by cognate RNA antitoxin ToxI, which has 2.9 nearly identical 34 nucleotide-long repeats. Non-cognate antitoxin RNA from P.atrosepticum does not inhibit this toxin. The toxin-antitoxin pair function in plasmid maintenance (a plasmid addiction system), but unlike its P.atrosepticum homolog it is not seen to confer resistance to bacteriophages. This chain is Endoribonuclease ToxN, found in Bacillus thuringiensis subsp. kurstaki.